Here is an 806-residue protein sequence, read N- to C-terminus: Lon protease (806 aa).

Residues 13–206 (LPMMPIRDVV…RVAEMLDIEI (194 aa)) enclose the Lon N-terminal domain. 356–363 (GPPGVGKT) provides a ligand contact to ATP. The Lon proteolytic domain occupies 599–780 (KNEIGAATGL…DEVLKIALER (182 aa)). Residues Ser686 and Lys729 contribute to the active site.

Belongs to the peptidase S16 family. Homohexamer. Organized in a ring with a central cavity.

The protein resides in the cytoplasm. It catalyses the reaction Hydrolysis of proteins in presence of ATP.. In terms of biological role, ATP-dependent serine protease that mediates the selective degradation of mutant and abnormal proteins as well as certain short-lived regulatory proteins. Required for cellular homeostasis and for survival from DNA damage and developmental changes induced by stress. Degrades polypeptides processively to yield small peptide fragments that are 5 to 10 amino acids long. Binds to DNA in a double-stranded, site-specific manner. The protein is Lon protease of Solibacter usitatus (strain Ellin6076).